A 1004-amino-acid chain; its full sequence is NACHT, LRR and PYD domains-containing protein 9C (1004 aa).

The Pyrin domain maps to 1 to 92 (MVDSSSYGLL…TMAQIERRDK (92 aa)). Residues 143 to 465 (ATAVVLGTRG…KQDKDTYHPV (323 aa)) enclose the NACHT domain. Residue 149-156 (GTRGKGKT) coordinates ATP. 5 LRR repeats span residues 750–770 (KVKH…MFLC), 779–800 (VLES…HLYE), 807–828 (HLSL…LLCE), 836–857 (TLKE…EISA), and 864–884 (NLKT…KRLC).

Belongs to the NLRP family. As to expression, oocyte specific.

Its subcellular location is the cytoplasm. May be involved in inflammation. The polypeptide is NACHT, LRR and PYD domains-containing protein 9C (Nlrp9c) (Mus musculus (Mouse)).